A 341-amino-acid chain; its full sequence is Zinc finger protein ZIC 4 (341 aa).

A disordered region spans residues 36-66 (HHGPQLAASSNPSVLPGLHEQPPQASHSRPL). The segment at 135-169 (LICKWLGDDSPMSPRPCSKTFSTMHELVTHVTVEH) adopts a C2H2-type 1; atypical zinc-finger fold. The segment at 178-205 (HICFWEECPRQGKPFKAKYKLVNHIRVH) adopts a C2H2-type 2; atypical zinc-finger fold. 3 C2H2-type zinc fingers span residues 211–235 (FPCP…KRTH), 241–265 (FRCE…SHVH), and 271–295 (YMCK…MKVH). The tract at residues 289 to 309 (RKHMKVHGRSPPPSSGYDSAI) is disordered.

It belongs to the GLI C2H2-type zinc-finger protein family. In terms of tissue distribution, exclusively expressed in the cerebellum.

It is found in the nucleus. In terms of biological role, binds to DNA. The sequence is that of Zinc finger protein ZIC 4 (Zic4) from Mus musculus (Mouse).